A 486-amino-acid chain; its full sequence is 6-phosphogluconate dehydrogenase, decarboxylating 2 (486 aa).

NADP(+) is bound by residues 12 to 17 (GLAVMG), 35 to 37 (NRT), 79 to 81 (VKA), and Asn-107. Residues Asn-107 and 133–135 (SGG) contribute to the substrate site. Catalysis depends on Lys-188, which acts as the Proton acceptor. 191 to 192 (HN) is a substrate binding site. Catalysis depends on Glu-195, which acts as the Proton donor. Substrate is bound by residues Tyr-196, Lys-266, Arg-293, Arg-456, and His-462. Positions 484-486 (SKI) match the Microbody targeting signal motif.

This sequence belongs to the 6-phosphogluconate dehydrogenase family. Forms homodimer. Forms heterodimers with PGD1 or PGD3.

The protein localises to the cytoplasm. It localises to the cytosol. The protein resides in the peroxisome. It carries out the reaction 6-phospho-D-gluconate + NADP(+) = D-ribulose 5-phosphate + CO2 + NADPH. It functions in the pathway carbohydrate degradation; pentose phosphate pathway; D-ribulose 5-phosphate from D-glucose 6-phosphate (oxidative stage): step 3/3. Functionally, catalyzes the oxidative decarboxylation of 6-phosphogluconate to ribulose 5-phosphate and CO(2), with concomitant reduction of NADP to NADPH. Required for guided growth of the male gametophytes and interaction between the pollen tube and the ovule. The chain is 6-phosphogluconate dehydrogenase, decarboxylating 2 from Arabidopsis thaliana (Mouse-ear cress).